Here is a 353-residue protein sequence, read N- to C-terminus: Protein XRP2 (353 aa).

Residues 1–37 form a disordered region; it reads MGCFFSKKAKRKRNSEEEQPQQDGEEPKQYSWDKREK. A lipid anchor (N-myristoyl glycine) is attached at Gly-2. Cys-3 is lipidated: S-palmitoyl cysteine. Residues 25 to 37 are compositionally biased toward basic and acidic residues; sequence EEPKQYSWDKREK. The C-CAP/cofactor C-like domain occupies 27–182; it reads PKQYSWDKRE…TWSNIHDFTP (156 aa). Residues 101–102 and 118–121 each bind GTP; these read GS and QQFR.

Belongs to the TBCC family. Post-translationally, myristoylated on Gly-2; which may be required for membrane targeting. In terms of processing, palmitoylated on Cys-3; which may be required for plasma membrane targeting.

The protein localises to the cell membrane. In terms of biological role, acts as a GTPase-activating protein (GAP) for tubulin in concert with tubulin-specific chaperone C, but does not enhance tubulin heterodimerization. Acts as a GTPase-activating protein. May act as guanine nucleotide dissociation inhibitor towards ADP-ribosylation factor-like proteins. This Xenopus laevis (African clawed frog) protein is Protein XRP2 (rp2).